The primary structure comprises 198 residues: Elongation factor Ts (198 aa).

The tract at residues 82 to 85 is involved in Mg(2+) ion dislocation from EF-Tu; it reads TDFV.

Belongs to the EF-Ts family.

The protein localises to the cytoplasm. Associates with the EF-Tu.GDP complex and induces the exchange of GDP to GTP. It remains bound to the aminoacyl-tRNA.EF-Tu.GTP complex up to the GTP hydrolysis stage on the ribosome. The chain is Elongation factor Ts from Oleidesulfovibrio alaskensis (strain ATCC BAA-1058 / DSM 17464 / G20) (Desulfovibrio alaskensis).